A 208-amino-acid polypeptide reads, in one-letter code: A-type ATP synthase subunit E (208 aa).

A disordered region spans residues 37-57; sequence DAEKTAEAEKNKILDNGKKQS.

The protein belongs to the V-ATPase E subunit family. In terms of assembly, has multiple subunits with at least A(3), B(3), C, D, E, F, H, I and proteolipid K(x).

It is found in the cell membrane. Component of the A-type ATP synthase that produces ATP from ADP in the presence of a proton gradient across the membrane. In Methanobrevibacter smithii (strain ATCC 35061 / DSM 861 / OCM 144 / PS), this protein is A-type ATP synthase subunit E.